A 915-amino-acid chain; its full sequence is DNA (cytosine-5)-methyltransferase 2 (915 aa).

Positions 1–14 are enriched in low complexity; that stretch reads MAPSSPSSARPTRA. The tract at residues 1–171 is disordered; that stretch reads MAPSSPSSAR…STAANKPEED (171 aa). Positions 15–30 are enriched in basic and acidic residues; the sequence is SGRERSAMAEEIHQNQ. A compositionally biased stretch (basic residues) spans 42–57; that stretch reads AKRRRKAASSGKKPKP. Positions 71–80 are enriched in basic and acidic residues; the sequence is KKGETEKTEP. Acidic residues predominate over residues 81-108; that stretch reads VVDDVCAEEPDEEELAMGEEEAEAEEQA. A compositionally biased stretch (low complexity) spans 109–119; the sequence is MQEVVAAVAAG. The region spanning 188 to 313 is the BAH domain; it reads IVYCLGDDVY…VAYSTFANIS (126 aa). Polar residues predominate over residues 315-328; it reads ENGQSGSETASGIS. A disordered region spans residues 315 to 338; it reads ENGQSGSETASGISSDDAGLETSS. In terms of domain architecture, SAM-dependent MTase C5-type spans 345-876; sequence ATLLDLYSGC…YCLGQAYLGE (532 aa). Residues 445-508 enclose the Chromo domain; that stretch reads FVVQKLIGIR…EGRKRKILPL (64 aa). Cys-521 is a catalytic residue.

This sequence belongs to the class I-like SAM-binding methyltransferase superfamily. C5-methyltransferase family.

The protein resides in the nucleus. It catalyses the reaction a 2'-deoxycytidine in DNA + S-adenosyl-L-methionine = a 5-methyl-2'-deoxycytidine in DNA + S-adenosyl-L-homocysteine + H(+). Functionally, may be involved in the CpXpG methylation and in gene silencing. This is DNA (cytosine-5)-methyltransferase 2 (ZMET5) from Zea mays (Maize).